Here is a 195-residue protein sequence, read N- to C-terminus: NADH-quinone oxidoreductase subunit B (195 aa).

Residues C74, C75, C139, and C169 each coordinate [4Fe-4S] cluster.

It belongs to the complex I 20 kDa subunit family. In terms of assembly, NDH-1 is composed of 14 different subunits. Subunits NuoB, C, D, E, F, and G constitute the peripheral sector of the complex. Requires [4Fe-4S] cluster as cofactor.

It is found in the cell inner membrane. The catalysed reaction is a quinone + NADH + 5 H(+)(in) = a quinol + NAD(+) + 4 H(+)(out). Functionally, NDH-1 shuttles electrons from NADH, via FMN and iron-sulfur (Fe-S) centers, to quinones in the respiratory chain. The immediate electron acceptor for the enzyme in this species is believed to be ubiquinone. Couples the redox reaction to proton translocation (for every two electrons transferred, four hydrogen ions are translocated across the cytoplasmic membrane), and thus conserves the redox energy in a proton gradient. This is NADH-quinone oxidoreductase subunit B from Methylobacterium radiotolerans (strain ATCC 27329 / DSM 1819 / JCM 2831 / NBRC 15690 / NCIMB 10815 / 0-1).